Reading from the N-terminus, the 201-residue chain is Ribosomal RNA large subunit methyltransferase E (201 aa).

The S-adenosyl-L-methionine site is built by glycine 49, tryptophan 51, aspartate 69, aspartate 90, and aspartate 113. The Proton acceptor role is filled by lysine 153.

It belongs to the class I-like SAM-binding methyltransferase superfamily. RNA methyltransferase RlmE family.

The protein localises to the cytoplasm. The enzyme catalyses uridine(2552) in 23S rRNA + S-adenosyl-L-methionine = 2'-O-methyluridine(2552) in 23S rRNA + S-adenosyl-L-homocysteine + H(+). Its function is as follows. Specifically methylates the uridine in position 2552 of 23S rRNA at the 2'-O position of the ribose in the fully assembled 50S ribosomal subunit. The sequence is that of Ribosomal RNA large subunit methyltransferase E from Desulfotalea psychrophila (strain LSv54 / DSM 12343).